Consider the following 324-residue polypeptide: 3-hydroxyisobutyrate dehydrogenase, mitochondrial (324 aa).

Residues 1-25 (MSLRVMSPAMLNAWSQTLVRAMSTQ) constitute a mitochondrion transit peptide. NAD(+)-binding positions include 29–58 (KNIGFVGLGNMGANMASNLIKAGHKLHVFD), 92–93 (LP), and Thr121. The active site involves Lys196. Position 271 (Lys271) interacts with NAD(+).

This sequence belongs to the HIBADH-related family. 3-hydroxyisobutyrate dehydrogenase subfamily.

It is found in the mitochondrion. The catalysed reaction is 3-hydroxy-2-methylpropanoate + NAD(+) = 2-methyl-3-oxopropanoate + NADH + H(+). Its pathway is amino-acid degradation; L-valine degradation. This Drosophila melanogaster (Fruit fly) protein is 3-hydroxyisobutyrate dehydrogenase, mitochondrial.